Here is a 77-residue protein sequence, read N- to C-terminus: Translational regulator CsrA (77 aa).

This sequence belongs to the CsrA/RsmA family. Homodimer; the beta-strands of each monomer intercalate to form a hydrophobic core, while the alpha-helices form wings that extend away from the core.

Its subcellular location is the cytoplasm. Its function is as follows. A translational regulator that binds mRNA to regulate translation initiation and/or mRNA stability. Usually binds in the 5'-UTR at or near the Shine-Dalgarno sequence preventing ribosome-binding, thus repressing translation. Its main target seems to be the major flagellin gene, while its function is anatagonized by FliW. This is Translational regulator CsrA from Pseudarthrobacter chlorophenolicus (strain ATCC 700700 / DSM 12829 / CIP 107037 / JCM 12360 / KCTC 9906 / NCIMB 13794 / A6) (Arthrobacter chlorophenolicus).